Here is a 221-residue protein sequence, read N- to C-terminus: UPF0319 protein CGSHiGG_02140 (221 aa).

A signal peptide spans 1 to 21; it reads MKLRAVVLGLATLCTSTATFA.

It belongs to the UPF0319 family.

The chain is UPF0319 protein CGSHiGG_02140 from Haemophilus influenzae (strain PittGG).